Here is a 152-residue protein sequence, read N- to C-terminus: Endoribonuclease YbeY (152 aa).

The Zn(2+) site is built by histidine 112, histidine 116, and histidine 122.

The protein belongs to the endoribonuclease YbeY family. Zn(2+) serves as cofactor.

The protein localises to the cytoplasm. Functionally, single strand-specific metallo-endoribonuclease involved in late-stage 70S ribosome quality control and in maturation of the 3' terminus of the 16S rRNA. The chain is Endoribonuclease YbeY from Pseudoalteromonas translucida (strain TAC 125).